Consider the following 214-residue polypeptide: uncharacterized protein (214 aa).

The signal sequence occupies residues 1 to 17 (MWCFIVFLTIFLPTLEG). N-linked (GlcNAc...) asparagine glycosylation is found at N88 and N139.

As to expression, component of the acid-insoluble organic matrix of calcified layers of the shell (at protein level).

The protein resides in the secreted. This is an uncharacterized protein from Lottia gigantea (Giant owl limpet).